Reading from the N-terminus, the 4518-residue chain is Dynein axonemal heavy chain 11 (4518 aa).

A stem region spans residues 1–1857 (MAASVAAQEA…LVHICDAQFQ (1857 aa)). AAA regions lie at residues 1858–2079 (YFYE…VLVV), 2139–2368 (QMVR…TSFK), 2474–2721 (TMDP…VFQG), and 2819–3068 (NYND…EGRH). ATP contacts are provided by residues 1896–1903 (GPAGTGKT), 2177–2184 (GNAGTGKS), 2512–2519 (GNAGVGKT), and 2857–2864 (GVGGSGKQ). A stalk region spans residues 3074-3405 (KSFLEQISLF…GQSIKSFEAQ (332 aa)). A coiled-coil region spans residues 3322–3391 (LAQANLELAT…NRLVKELEVK (70 aa)). 2 AAA regions span residues 3461 to 3688 (LTDD…EIER) and 3898 to 4124 (LRNF…VLYN).

The protein belongs to the dynein heavy chain family. In terms of assembly, consists of at least two heavy chains and a number of intermediate and light chains. Interacts with CFAP45.

It is found in the cytoplasm. Its subcellular location is the cytoskeleton. The protein resides in the cilium axoneme. Force generating protein of respiratory cilia. Produces force towards the minus ends of microtubules. Dynein has ATPase activity; the force-producing power stroke is thought to occur on release of ADP. This is Dynein axonemal heavy chain 11 (DNAH11) from Sus scrofa (Pig).